A 133-amino-acid polypeptide reads, in one-letter code: Phosphoribosyl-AMP cyclohydrolase (133 aa).

Residue D77 coordinates Mg(2+). Residue C78 coordinates Zn(2+). Mg(2+) is bound by residues D79 and D81. Residues C95 and C102 each contribute to the Zn(2+) site.

It belongs to the PRA-CH family. In terms of assembly, homodimer. It depends on Mg(2+) as a cofactor. Zn(2+) serves as cofactor.

It localises to the cytoplasm. It catalyses the reaction 1-(5-phospho-beta-D-ribosyl)-5'-AMP + H2O = 1-(5-phospho-beta-D-ribosyl)-5-[(5-phospho-beta-D-ribosylamino)methylideneamino]imidazole-4-carboxamide. Its pathway is amino-acid biosynthesis; L-histidine biosynthesis; L-histidine from 5-phospho-alpha-D-ribose 1-diphosphate: step 3/9. Functionally, catalyzes the hydrolysis of the adenine ring of phosphoribosyl-AMP. This chain is Phosphoribosyl-AMP cyclohydrolase, found in Azotobacter vinelandii (strain DJ / ATCC BAA-1303).